A 122-amino-acid chain; its full sequence is Large ribosomal subunit protein uL14 (122 aa).

It belongs to the universal ribosomal protein uL14 family. Part of the 50S ribosomal subunit. Forms a cluster with proteins L3 and L19. In the 70S ribosome, L14 and L19 interact and together make contacts with the 16S rRNA in bridges B5 and B8.

In terms of biological role, binds to 23S rRNA. Forms part of two intersubunit bridges in the 70S ribosome. This Amoebophilus asiaticus (strain 5a2) protein is Large ribosomal subunit protein uL14.